Reading from the N-terminus, the 174-residue chain is Guided entry of tail-anchored proteins factor 1 (174 aa).

The Lumenal segment spans residues 1 to 8; sequence MSASETDR. A helical membrane pass occupies residues 9–29; sequence WAWLLVLSFVFGCNLLRILLP. Residues 30–99 lie on the Cytoplasmic side of the membrane; that stretch reads SLSSFISRVL…VKARTAQLAK (70 aa). The stretch at 39–94 forms a coiled coil; sequence LQKDAEQESQMRAEIQGMKQELSTVNMMDEFARYARLERKINKMTDKLKTHVKART. Residues 39 to 97 form an interaction with GET3/TRC40 region; the sequence is LQKDAEQESQMRAEIQGMKQELSTVNMMDEFARYARLERKINKMTDKLKTHVKARTAQL. Residues 100 to 120 traverse the membrane as a helical segment; that stretch reads IKWFISVAFYILQAALMISLI. Over 121–148 the chain is Lumenal; sequence WKYYSVPVAVVPSKWITPLDRLVAFPTR. Residues 149–169 traverse the membrane as a helical segment; it reads VAGGIGITCWILVCNKVVAIV. The Cytoplasmic portion of the chain corresponds to 170-174; sequence LHPFS.

The protein belongs to the WRB/GET1 family. In terms of assembly, component of the Golgi to ER traffic (GET) complex, which is composed of GET1, CAMLG/GET2 and GET3. Within the complex, GET1 and CAMLG form a heterotetramer which is stabilized by phosphatidylinositol binding and which binds to the GET3 homodimer. Interacts with CAMLG/GET2 (via C-terminus). GET3 shows a higher affinity for CAMLG than for GET1.

The protein resides in the endoplasmic reticulum membrane. Its function is as follows. Required for the post-translational delivery of tail-anchored (TA) proteins to the endoplasmic reticulum. Together with CAMLG/GET2, acts as a membrane receptor for soluble GET3/TRC40, which recognizes and selectively binds the transmembrane domain of TA proteins in the cytosol. Required to ensure correct topology and ER insertion of CAMLG. The protein is Guided entry of tail-anchored proteins factor 1 of Mus musculus (Mouse).